Consider the following 712-residue polypeptide: Frizzled-6 (712 aa).

The signal sequence occupies residues 1–18 (MEMFTFLLTCVFLPFVRG). An FZ domain is found at 19-132 (HSLFTCEPIT…CDRLQYCDET (114 aa)). Over 19-201 (HSLFTCEPIT…SDELEFAKSF (183 aa)) the chain is Extracellular. Intrachain disulfides connect C24/C85, C32/C78, C69/C106, C95/C129, and C99/C123. N38 carries an N-linked (GlcNAc...) asparagine glycan. Residues 202–222 (IGIVSIFCLCATLFTFLTFLI) traverse the membrane as a helical segment. Residues 223–233 (DVKRFRYPERP) are Cytoplasmic-facing. The helical transmembrane segment at 234–254 (IIYYSVCYSIVSLMYFIGFLL) threads the bilayer. The Extracellular segment spans residues 255 to 284 (GDRTACNKADEKLELGDTVVLGSQNKACTV). A helical transmembrane segment spans residues 285 to 305 (LFMFLYFFTMAGTVWWVILTI). The Cytoplasmic segment spans residues 306-324 (TWFLAAGRKWSCEAIEQKA). Residues 325–345 (VWFHAVAWGIPGFLTVMLLAM) form a helical membrane-spanning segment. The Extracellular segment spans residues 346–370 (NKVEGDNISGVCFVGLYDLDASRYF). N352 carries an N-linked (GlcNAc...) asparagine glycan. The helical transmembrane segment at 371–391 (VLLPLCLCVFVGLSLLLAGII) threads the bilayer. Topologically, residues 392–416 (SLNHVRQVIQHDGRNQEKLKKFMIR) are cytoplasmic. Residues 417 to 437 (IGVFSGLYLVPLVTLLGCYVY) traverse the membrane as a helical segment. Over 438–473 (EQVNRITWEITWVSDHCRQYHIPCPYQAKTETRPEL) the chain is Extracellular. The chain crosses the membrane as a helical span at residues 474–494 (ALFMIKYLMTLIVGISAVFWV). Residues 495-712 (GSKKTCTEWA…EHGTGSHSDT (218 aa)) lie on the Cytoplasmic side of the membrane. Positions 498–503 (KTCTEW) match the Lys-Thr-X-X-X-Trp motif, mediates interaction with the PDZ domain of Dvl family members motif. Positions 588–712 (EIQTSPETSV…EHGTGSHSDT (125 aa)) are disordered. 2 stretches are compositionally biased toward basic and acidic residues: residues 628-637 (LCEEQADRKG) and 652-664 (TRSEGRVTPKSDV). Residues 668–693 (GPMQSSSLQVPGSSEPGSLKGSTSLL) show a composition bias toward polar residues. The segment covering 700–712 (GRKEHGTGSHSDT) has biased composition (basic and acidic residues).

The protein belongs to the G-protein coupled receptor Fz/Smo family. Interacts with LMBR1L. Post-translationally, ubiquitinated by ZNRF3, leading to its degradation by the proteasome.

Its subcellular location is the membrane. It is found in the cell membrane. The protein localises to the cell surface. The protein resides in the apical cell membrane. It localises to the cytoplasmic vesicle membrane. Its subcellular location is the endoplasmic reticulum membrane. Its function is as follows. Receptor for Wnt proteins. Most of frizzled receptors are coupled to the beta-catenin canonical signaling pathway, which leads to the activation of disheveled proteins, inhibition of GSK-3 kinase, nuclear accumulation of beta-catenin and activation of Wnt target genes. A second signaling pathway involving PKC and calcium fluxes has been seen for some family members, but it is not yet clear if it represents a distinct pathway or if it can be integrated in the canonical pathway, as PKC seems to be required for Wnt-mediated inactivation of GSK-3 kinase. Both pathways seem to involve interactions with G-proteins. Activation by Wnt5A stimulates PKC activity via a G-protein-dependent mechanism. Involved in transduction and intercellular transmission of polarity information during tissue morphogenesis and/or in differentiated tissues. Together with FZD3, is involved in the neural tube closure and plays a role in the regulation of the establishment of planar cell polarity (PCP), particularly in the orientation of asymmetric bundles of stereocilia on the apical faces of a subset of auditory and vestibular sensory cells located in the inner ear. The sequence is that of Frizzled-6 (FZD6) from Canis lupus familiaris (Dog).